We begin with the raw amino-acid sequence, 958 residues long: Glycine dehydrogenase (decarboxylating) (958 aa).

The residue at position 705 (Lys-705) is an N6-(pyridoxal phosphate)lysine.

It belongs to the GcvP family. As to quaternary structure, the glycine cleavage system is composed of four proteins: P, T, L and H. Pyridoxal 5'-phosphate is required as a cofactor.

It catalyses the reaction N(6)-[(R)-lipoyl]-L-lysyl-[glycine-cleavage complex H protein] + glycine + H(+) = N(6)-[(R)-S(8)-aminomethyldihydrolipoyl]-L-lysyl-[glycine-cleavage complex H protein] + CO2. In terms of biological role, the glycine cleavage system catalyzes the degradation of glycine. The P protein binds the alpha-amino group of glycine through its pyridoxal phosphate cofactor; CO(2) is released and the remaining methylamine moiety is then transferred to the lipoamide cofactor of the H protein. The chain is Glycine dehydrogenase (decarboxylating) from Bdellovibrio bacteriovorus (strain ATCC 15356 / DSM 50701 / NCIMB 9529 / HD100).